The chain runs to 464 residues: UDP-glycosyltransferase 83A1 (464 aa).

Residues serine 295, 341-343 (APQ), 358-366 (HCGWNSTLE), and 380-383 (FADQ) contribute to the UDP-alpha-D-glucose site.

Belongs to the UDP-glycosyltransferase family.

This Arabidopsis thaliana (Mouse-ear cress) protein is UDP-glycosyltransferase 83A1 (UGT83A1).